The primary structure comprises 848 residues: Leucine--tRNA ligase (848 aa).

Positions 1 to 21 (MTENTPGTSAPERFDPATADT) are disordered. The short motif at 51–61 (PYPSGRIHIGH) is the 'HIGH' region element. Residues 625 to 629 (KMSKS) carry the 'KMSKS' region motif. K628 contacts ATP.

This sequence belongs to the class-I aminoacyl-tRNA synthetase family.

It localises to the cytoplasm. It catalyses the reaction tRNA(Leu) + L-leucine + ATP = L-leucyl-tRNA(Leu) + AMP + diphosphate. This is Leucine--tRNA ligase from Novosphingobium aromaticivorans (strain ATCC 700278 / DSM 12444 / CCUG 56034 / CIP 105152 / NBRC 16084 / F199).